Consider the following 262-residue polypeptide: Ornithine carbamoyltransferase (262 aa).

Residues 3 to 7, Gln30, Arg54, and 81 to 84 each bind carbamoyl phosphate; these read STRTR and HPTQ. L-ornithine contacts are provided by residues Asn114, Asp178, and 182–183; that span reads SM. Carbamoyl phosphate-binding positions include 219 to 222 and Thr247; that span reads HCLP.

This sequence belongs to the aspartate/ornithine carbamoyltransferase superfamily. OTCase family.

The protein localises to the cytoplasm. The catalysed reaction is carbamoyl phosphate + L-ornithine = L-citrulline + phosphate + H(+). Its pathway is amino-acid biosynthesis; L-arginine biosynthesis; L-arginine from L-ornithine and carbamoyl phosphate: step 1/3. This Neisseria cinerea protein is Ornithine carbamoyltransferase (argF).